A 62-amino-acid polypeptide reads, in one-letter code: uncharacterized protein (62 aa).

This is an uncharacterized protein from Escherichia coli (strain K12).